The primary structure comprises 402 residues: Multidrug resistance protein MdtH (402 aa).

Residues Met1 to Lys12 lie on the Cytoplasmic side of the membrane. Residues Tyr13–Ile33 traverse the membrane as a helical segment. Topologically, residues Ser34–Glu98 are periplasmic. The chain crosses the membrane as a helical span at residues Pro99–Phe116. At Asp117–Ser138 the chain is on the cytoplasmic side. A helical membrane pass occupies residues Leu139 to Leu159. Residues Gln160–Arg164 lie on the Periplasmic side of the membrane. A helical membrane pass occupies residues Leu165–Leu185. At Pro186–Tyr213 the chain is on the cytoplasmic side. A helical membrane pass occupies residues Val214 to Met234. The Periplasmic segment spans residues Val235–Ala243. Residues Ala244–Ala264 form a helical membrane-spanning segment. Topologically, residues Arg265–Arg276 are cytoplasmic. A helical transmembrane segment spans residues Leu277–Leu297. Over Gln298 to Gln299 the chain is Periplasmic. A helical membrane pass occupies residues Leu300 to Thr320. The Cytoplasmic portion of the chain corresponds to Leu321–Arg339. A helical transmembrane segment spans residues Leu340–Gly360. The Periplasmic segment spans residues Lys361–Glu367. Residues Leu368–Phe388 form a helical membrane-spanning segment. Residues Ser389–Ala402 are Cytoplasmic-facing.

It belongs to the major facilitator superfamily. DHA1 family. MdtH (TC 2.A.1.2.21) subfamily.

The protein resides in the cell inner membrane. The chain is Multidrug resistance protein MdtH from Salmonella typhi.